A 157-amino-acid polypeptide reads, in one-letter code: Small ribosomal subunit protein uS17 (157 aa).

It belongs to the universal ribosomal protein uS17 family.

The polypeptide is Small ribosomal subunit protein uS17 (RPS11) (Dunaliella tertiolecta (Green alga)).